A 374-amino-acid chain; its full sequence is Chaperone protein DnaJ (374 aa).

Residues 5–70 (DYYEVLGVAR…NKRRMYDSHG (66 aa)) enclose the J domain. The segment at 130–207 (GVERRIEIPT…CHGNGRVEED (78 aa)) adopts a CR-type zinc-finger fold. Residues cysteine 143, cysteine 146, cysteine 159, cysteine 162, cysteine 181, cysteine 184, cysteine 195, and cysteine 198 each contribute to the Zn(2+) site. 4 CXXCXGXG motif repeats span residues 143–150 (CGDCDGSG), 159–166 (CNVCHGRG), 181–188 (CHNCGGRG), and 195–202 (CKTCHGNG).

It belongs to the DnaJ family. As to quaternary structure, homodimer. Zn(2+) serves as cofactor.

It is found in the cytoplasm. Participates actively in the response to hyperosmotic and heat shock by preventing the aggregation of stress-denatured proteins and by disaggregating proteins, also in an autonomous, DnaK-independent fashion. Unfolded proteins bind initially to DnaJ; upon interaction with the DnaJ-bound protein, DnaK hydrolyzes its bound ATP, resulting in the formation of a stable complex. GrpE releases ADP from DnaK; ATP binding to DnaK triggers the release of the substrate protein, thus completing the reaction cycle. Several rounds of ATP-dependent interactions between DnaJ, DnaK and GrpE are required for fully efficient folding. Also involved, together with DnaK and GrpE, in the DNA replication of plasmids through activation of initiation proteins. The protein is Chaperone protein DnaJ of Stenotrophomonas maltophilia (strain K279a).